The chain runs to 284 residues: CBY1-interacting BAR domain-containing protein 1-A (284 aa).

A mitochondrion-targeting transit peptide spans 1–48; that stretch reads MSQTPEARARDNQTRQIQESVNNVEKHFGELCQIFAGYVRKTARLRDK. The interval 11 to 221 is BAR-like; the sequence is DNQTRQIQES…DIDEEEDLEV (211 aa). 2 coiled-coil regions span residues 142 to 184 and 260 to 284; these read RQII…IKKL and NRQK…EDEN. Polar residues predominate over residues 242–261; that stretch reads SRTGSTSRGPSVISQPPGNR. The disordered stretch occupies residues 242 to 284; sequence SRTGSTSRGPSVISQPPGNRQKNRIEDEDEEEEDDENSTEDEN. The span at 267-284 shows a compositional bias: acidic residues; that stretch reads EDEDEEEEDDENSTEDEN.

It belongs to the CIBAR family.

It localises to the cytoplasm. The protein resides in the cytoskeleton. It is found in the microtubule organizing center. The protein localises to the centrosome. Its subcellular location is the centriole. It localises to the nucleus. The protein resides in the mitochondrion inner membrane. It is found in the cell projection. The protein localises to the cilium. Its subcellular location is the flagellum. Its function is as follows. Plays a critical role in regulating mitochondrial ultrastructure and function by maintaining the integrity of mitochondrial morphology, particularly the organization of cristae. Plays a crucial role in ciliogenesis. Plays a key role in the correct positioning of the annulus, a septin-based ring structure in the sperm flagellum, serving both as a physical barrier and a membrane diffusion barrier that separates the midpiece (MP) from the principal piece (PP). The chain is CBY1-interacting BAR domain-containing protein 1-A from Xenopus laevis (African clawed frog).